The sequence spans 394 residues: Elongation factor Tu (394 aa).

Positions 10 to 204 constitute a tr-type G domain; that stretch reads KPHVNVGTIG…ALDSYIPEPQ (195 aa). The interval 19–26 is G1; it reads GHVDHGKT. A GTP-binding site is contributed by 19-26; that stretch reads GHVDHGKT. Residue Thr-26 coordinates Mg(2+). Positions 60–64 are G2; the sequence is GITIN. A G3 region spans residues 81-84; it reads DCPG. GTP is bound by residues 81–85 and 136–139; these read DCPGH and NKCD. Positions 136-139 are G4; the sequence is NKCD. Residues 174–176 form a G5 region; it reads SAL.

Belongs to the TRAFAC class translation factor GTPase superfamily. Classic translation factor GTPase family. EF-Tu/EF-1A subfamily. Monomer.

It localises to the cytoplasm. The enzyme catalyses GTP + H2O = GDP + phosphate + H(+). In terms of biological role, GTP hydrolase that promotes the GTP-dependent binding of aminoacyl-tRNA to the A-site of ribosomes during protein biosynthesis. This Shewanella baltica (strain OS185) protein is Elongation factor Tu.